We begin with the raw amino-acid sequence, 801 residues long: Phenylalanine--tRNA ligase beta subunit (801 aa).

The tRNA-binding domain maps to 39–154; it reads LKMPQKVVVG…GHLELGVELG (116 aa). The B5 domain occupies 398-475; the sequence is IDEITIKTTF…RIYGIDNVSS (78 aa). Residues D453, D459, E462, and E463 each contribute to the Mg(2+) site. One can recognise an FDX-ACB domain in the interval 708–800; that stretch reads SKYQKSTRDL…LVREFDAVLR (93 aa).

Belongs to the phenylalanyl-tRNA synthetase beta subunit family. Type 1 subfamily. In terms of assembly, tetramer of two alpha and two beta subunits. It depends on Mg(2+) as a cofactor.

The protein localises to the cytoplasm. It carries out the reaction tRNA(Phe) + L-phenylalanine + ATP = L-phenylalanyl-tRNA(Phe) + AMP + diphosphate + H(+). In Helicobacter hepaticus (strain ATCC 51449 / 3B1), this protein is Phenylalanine--tRNA ligase beta subunit.